The chain runs to 464 residues: Cystathionine beta-lyase, chloroplastic (464 aa).

The N-terminal 55 residues, 1–55, are a transit peptide targeting the chloroplast; the sequence is MTSSLSLHSSFVPSFADLSDRGLISKNSPTSVSISKVPTWEKKQISNRNSFKLNC. Residues tyrosine 127, arginine 129, glycine 157, methionine 158, serine 275, and threonine 277 each contribute to the pyridoxal 5'-phosphate site. Lysine 278 is modified (N6-(pyridoxal phosphate)lysine).

The protein belongs to the trans-sulfuration enzymes family. Forms homodimers. May form homotetramers from two homodimers. Pyridoxal 5'-phosphate is required as a cofactor.

Its subcellular location is the plastid. It is found in the chloroplast. The enzyme catalyses L,L-cystathionine + H2O = L-homocysteine + pyruvate + NH4(+). It carries out the reaction an S-substituted L-cysteine + H2O = a thiol + pyruvate + NH4(+). It functions in the pathway amino-acid biosynthesis; L-methionine biosynthesis via de novo pathway; L-homocysteine from L-cystathionine: step 1/1. In terms of biological role, catalyzes the penultimate step in the de novo biosynthesis of methionine. Its role in methionine metabolism may affect plant development in different organs, probably by modifying plant auxin transport. Its cysteine desulfhydrase activity may be involved in hydrogen sulfur production using L-cysteine as a substrate. This Arabidopsis thaliana (Mouse-ear cress) protein is Cystathionine beta-lyase, chloroplastic.